The sequence spans 499 residues: Probable cytosol aminopeptidase (499 aa).

Residues Lys-269 and Asp-274 each coordinate Mn(2+). Lys-281 is an active-site residue. Mn(2+)-binding residues include Asp-292, Asp-351, and Glu-353. Arg-355 is a catalytic residue.

This sequence belongs to the peptidase M17 family. Mn(2+) is required as a cofactor.

It localises to the cytoplasm. It carries out the reaction Release of an N-terminal amino acid, Xaa-|-Yaa-, in which Xaa is preferably Leu, but may be other amino acids including Pro although not Arg or Lys, and Yaa may be Pro. Amino acid amides and methyl esters are also readily hydrolyzed, but rates on arylamides are exceedingly low.. It catalyses the reaction Release of an N-terminal amino acid, preferentially leucine, but not glutamic or aspartic acids.. Presumably involved in the processing and regular turnover of intracellular proteins. Catalyzes the removal of unsubstituted N-terminal amino acids from various peptides. The sequence is that of Probable cytosol aminopeptidase from Actinobacillus pleuropneumoniae serotype 5b (strain L20).